A 283-amino-acid polypeptide reads, in one-letter code: 4-hydroxy-3-methylbut-2-enyl diphosphate reductase (283 aa).

Residue C12 participates in [4Fe-4S] cluster binding. (2E)-4-hydroxy-3-methylbut-2-enyl diphosphate is bound by residues H40 and H73. Dimethylallyl diphosphate is bound by residues H40 and H73. Isopentenyl diphosphate-binding residues include H40 and H73. C95 is a binding site for [4Fe-4S] cluster. H123 contacts (2E)-4-hydroxy-3-methylbut-2-enyl diphosphate. Residue H123 coordinates dimethylallyl diphosphate. H123 serves as a coordination point for isopentenyl diphosphate. E125 acts as the Proton donor in catalysis. A (2E)-4-hydroxy-3-methylbut-2-enyl diphosphate-binding site is contributed by T161. Residue C189 coordinates [4Fe-4S] cluster. (2E)-4-hydroxy-3-methylbut-2-enyl diphosphate-binding residues include S217, N219, and S261. Dimethylallyl diphosphate contacts are provided by S217, N219, and S261. Isopentenyl diphosphate-binding residues include S217, N219, and S261.

Belongs to the IspH family. [4Fe-4S] cluster serves as cofactor.

It carries out the reaction isopentenyl diphosphate + 2 oxidized [2Fe-2S]-[ferredoxin] + H2O = (2E)-4-hydroxy-3-methylbut-2-enyl diphosphate + 2 reduced [2Fe-2S]-[ferredoxin] + 2 H(+). The catalysed reaction is dimethylallyl diphosphate + 2 oxidized [2Fe-2S]-[ferredoxin] + H2O = (2E)-4-hydroxy-3-methylbut-2-enyl diphosphate + 2 reduced [2Fe-2S]-[ferredoxin] + 2 H(+). It participates in isoprenoid biosynthesis; dimethylallyl diphosphate biosynthesis; dimethylallyl diphosphate from (2E)-4-hydroxy-3-methylbutenyl diphosphate: step 1/1. It functions in the pathway isoprenoid biosynthesis; isopentenyl diphosphate biosynthesis via DXP pathway; isopentenyl diphosphate from 1-deoxy-D-xylulose 5-phosphate: step 6/6. Catalyzes the conversion of 1-hydroxy-2-methyl-2-(E)-butenyl 4-diphosphate (HMBPP) into a mixture of isopentenyl diphosphate (IPP) and dimethylallyl diphosphate (DMAPP). Acts in the terminal step of the DOXP/MEP pathway for isoprenoid precursor biosynthesis. The chain is 4-hydroxy-3-methylbut-2-enyl diphosphate reductase from Geobacter sp. (strain M21).